Reading from the N-terminus, the 437-residue chain is Carbonic anhydrase 9 (437 aa).

The N-terminal stretch at 1 to 31 is a signal peptide; it reads MASLGPSPWAPLSTPAPTAQLLLFLLLQVSA. Positions 32 to 95 are proteoglycan-like (PG); it reads QPQGLSGMQG…RMEESLGLED (64 aa). The Extracellular portion of the chain corresponds to 32–390; it reads QPQGLSGMQG…HVNSCFTAGD (359 aa). Residues 34–118 form a disordered region; it reads QGLSGMQGEP…HGDEKGGGHS (85 aa). Positions 50–79 are enriched in acidic residues; the sequence is SGEDELGVDVLPSEEDAPEEADPPDGEDPP. A catalytic region spans residues 96–390; it reads LSTPEAPEHS…HVNSCFTAGD (295 aa). Thr-98 carries O-linked (GlcNAc...) threonine glycosylation. The region spanning 118 to 369 is the Alpha-carbonic anhydrase domain; the sequence is SHWSYGGTLL…LNGRTIEASF (252 aa). The cysteines at positions 135 and 315 are disulfide-linked. His-179 acts as the Proton donor/acceptor in catalysis. Zn(2+) contacts are provided by His-205, His-207, and His-230. 311 to 312 contributes to the substrate binding site; that stretch reads TT. Asn-325 is a glycosylation site (N-linked (GlcNAc...) asparagine). The helical transmembrane segment at 391–411 threads the bilayer; it reads ILALVFGLLFAVTSIAFLLQL. At 412 to 437 the chain is on the cytoplasmic side; sequence RRQHRHRSGTKDRVSYSPAEMTETGA. Tyr-427 carries the post-translational modification Phosphotyrosine.

Belongs to the alpha-carbonic anhydrase family. Forms oligomers linked by disulfide bonds. Requires Zn(2+) as cofactor. In terms of processing, asn-325 bears high-mannose type glycan structures.

Its subcellular location is the nucleus. The protein localises to the nucleolus. It localises to the cell membrane. It is found in the cell projection. The protein resides in the microvillus membrane. The catalysed reaction is hydrogencarbonate + H(+) = CO2 + H2O. Its activity is regulated as follows. Inhibited by acetazolamide. In terms of biological role, catalyzes the interconversion between carbon dioxide and water and the dissociated ions of carbonic acid (i.e. bicarbonate and hydrogen ions). This is Carbonic anhydrase 9 (Ca9) from Mus musculus (Mouse).